We begin with the raw amino-acid sequence, 306 residues long: Ribonucleoside-diphosphate reductase small subunit (306 aa).

Aspartate 66, glutamate 96, and histidine 99 together coordinate Fe cation. Residue tyrosine 103 is part of the active site. Residues 153-173 traverse the membrane as a helical segment; sequence ILMILIEGIFFVSSFAAIAYL. 3 residues coordinate Fe cation: glutamate 159, glutamate 193, and histidine 196.

It belongs to the ribonucleoside diphosphate reductase small chain family. In terms of assembly, heterotetramer composed of a homodimer of the large subunit (R1) and a homodimer of the small subunit (R2). Larger multisubunit protein complex are also active, composed of (R1)n(R2)n. Fe cation serves as cofactor.

It localises to the host membrane. The catalysed reaction is a 2'-deoxyribonucleoside 5'-diphosphate + [thioredoxin]-disulfide + H2O = a ribonucleoside 5'-diphosphate + [thioredoxin]-dithiol. Ribonucleoside-diphosphate reductase holoenzyme provides the precursors necessary for viral DNA synthesis. Allows virus growth in non-dividing cells, as well as reactivation from latency in infected hosts. Catalyzes the biosynthesis of deoxyribonucleotides from the corresponding ribonucleotides. The sequence is that of Ribonucleoside-diphosphate reductase small subunit from Varicella-zoster virus (strain Dumas) (HHV-3).